Consider the following 80-residue polypeptide: Small ribosomal subunit protein uS17c (80 aa).

It belongs to the universal ribosomal protein uS17 family. In terms of assembly, part of the 30S ribosomal subunit.

It localises to the plastid. The protein resides in the chloroplast. In terms of biological role, one of the primary rRNA binding proteins, it binds specifically to the 5'-end of 16S ribosomal RNA. The sequence is that of Small ribosomal subunit protein uS17c (rps17) from Gracilaria tenuistipitata var. liui (Red alga).